A 607-amino-acid chain; its full sequence is Autophagy-related protein 22-2 (607 aa).

Positions 1–29 (MTVAPPSPNSPAAELQQRPPRYPGEDTTP) are disordered. A helical membrane pass occupies residues 41 to 61 (YGIAAEVFAVCGVGSFLPLTL). A glycan (N-linked (GlcNAc...) asparagine) is linked at Asn-89. Transmembrane regions (helical) follow at residues 119 to 139 (SFAMYTFSLAVLVQALTLISF), 151 to 170 (TLLLAFGFIGSATSMLFVFI), and 188 to 208 (CLGSSFVVLNSFLPVLVANDP). Residues 235–263 (SFSASDAESGPHPAAEAGSGTSSGPASPE) are disordered. The segment covering 247 to 263 (PAAEAGSGTSSGPASPE) has biased composition (low complexity). 4 helical membrane passes run 274-294 (GVGLGYCAAVLVQILSISLLF), 307-327 (TLPLRFVLLLVGIWWFSFTMV), 379-399 (VLVFLAAWFLLSDAMATVSGT), and 415-435 (VGLLSITATLSGMAGAFLWPV). An N-linked (GlcNAc...) asparagine glycan is attached at Asn-445. The next 4 membrane-spanning stretches (helical) occupy residues 450 to 470 (LCIALFEIIPLYGMLAYIPVF), 485 to 507 (FPLAIVHGVVSGGLSSYCRSFFG), 519 to 541 (YALYAATDKGSSVIGPAIVGMLI), and 550 to 570 (GFFFIAPLILMPIPLIWIVNA). Residues 586–607 (KGHETEMSEQTEEAEGLLARGI) are disordered.

The protein belongs to the ATG22 family.

The protein localises to the vacuole membrane. Functionally, vacuolar effluxer which mediate the efflux of amino acids resulting from autophagic degradation. The release of autophagic amino acids allows the maintenance of protein synthesis and viability during nitrogen starvation. The sequence is that of Autophagy-related protein 22-2 (atg22-2) from Aspergillus oryzae (strain ATCC 42149 / RIB 40) (Yellow koji mold).